The chain runs to 884 residues: Alanine--tRNA ligase (884 aa).

Residues histidine 562, histidine 566, cysteine 674, and histidine 678 each contribute to the Zn(2+) site.

This sequence belongs to the class-II aminoacyl-tRNA synthetase family. The cofactor is Zn(2+).

The protein localises to the cytoplasm. It catalyses the reaction tRNA(Ala) + L-alanine + ATP = L-alanyl-tRNA(Ala) + AMP + diphosphate. Catalyzes the attachment of alanine to tRNA(Ala) in a two-step reaction: alanine is first activated by ATP to form Ala-AMP and then transferred to the acceptor end of tRNA(Ala). Also edits incorrectly charged Ser-tRNA(Ala) and Gly-tRNA(Ala) via its editing domain. This Rhizobium etli (strain ATCC 51251 / DSM 11541 / JCM 21823 / NBRC 15573 / CFN 42) protein is Alanine--tRNA ligase.